Here is a 445-residue protein sequence, read N- to C-terminus: MSKKLYIKTYGCQMNVYDSVKIQDLLYPFGYESTEDIKEADIIILNTCHIREKAAEKTYSELGRIKKLQNTRKQEGLNPAIIVVAGCVAQAEGEEIFSRTPYVDIVVGPQSYYNLPELISKVVRHEKQLIDLDFVEEAKFDNLPEQLYPQGASSFISVQEGCDKFCTFCVVPYTRGAEFSRSVEQVYRESLKAVSNDAKEIILLGQNVNAYHGKGPKDKIFTLADLLKCLAQIPNLARLRYMTSHPIDMTDDLIKLHGTEPKLMPFLHLPVQSGSNKILKAMNRKHDRDYYFNIINRLREARSDIVLSSDFIVGFPGETEQDFEDTLDLVHRVKYGQCYSFKYSPRPGTPGAIRTDQIPEHIKSKRLTILQQELATQQLAFNQSCVGSTMRVLFDRDGKFEDQIIGKTPYMQSVYIHNPNKSLLGKIVDVIITKAALNSLTGEIL.

One can recognise an MTTase N-terminal domain in the interval 3-124 (KKLYIKTYGC…LPELISKVVR (122 aa)). The [4Fe-4S] cluster site is built by cysteine 12, cysteine 48, cysteine 87, cysteine 162, cysteine 166, and cysteine 169. The 233-residue stretch at 148 to 380 (YPQGASSFIS…QQELATQQLA (233 aa)) folds into the Radical SAM core domain. Residues 383 to 445 (QSCVGSTMRV…ALNSLTGEIL (63 aa)) enclose the TRAM domain.

The protein belongs to the methylthiotransferase family. MiaB subfamily. Monomer. [4Fe-4S] cluster serves as cofactor.

The protein resides in the cytoplasm. The catalysed reaction is N(6)-dimethylallyladenosine(37) in tRNA + (sulfur carrier)-SH + AH2 + 2 S-adenosyl-L-methionine = 2-methylsulfanyl-N(6)-dimethylallyladenosine(37) in tRNA + (sulfur carrier)-H + 5'-deoxyadenosine + L-methionine + A + S-adenosyl-L-homocysteine + 2 H(+). Its function is as follows. Catalyzes the methylthiolation of N6-(dimethylallyl)adenosine (i(6)A), leading to the formation of 2-methylthio-N6-(dimethylallyl)adenosine (ms(2)i(6)A) at position 37 in tRNAs that read codons beginning with uridine. This is tRNA-2-methylthio-N(6)-dimethylallyladenosine synthase from Rickettsia prowazekii (strain Madrid E).